The sequence spans 325 residues: MEIEAVEKEAIEKLSKISNVQELESFRIEFLGKKGKITGLMKNLKNLPPEERPAYGKRVNELREKIEKLFEEKRQQIQRILEQEKMEKMRIDVTVPGARRKLGHSHPVLKVMEEIERIFVSMGFDVVEGPEIETTWHNFDALNTPEWHPARDEHDSFYITDDLLLRTHTSPVQIRTMLERKPPIAIISPGKVYRRDYDATHLPMFHQVEGLHVDRDLSVAHLKFTLEEFARRMFGEGAKVRLRPSFFPFTEPSFEVDVYLSGYGWLEILGAGMVDPNVFLNVGYDPEEWTGYAFGMGVERIAMLKYGITDIREFVRNDVRFLSSY.

Position 251 (E251) interacts with Mg(2+).

Belongs to the class-II aminoacyl-tRNA synthetase family. Phe-tRNA synthetase alpha subunit type 1 subfamily. As to quaternary structure, tetramer of two alpha and two beta subunits. It depends on Mg(2+) as a cofactor.

The protein localises to the cytoplasm. The enzyme catalyses tRNA(Phe) + L-phenylalanine + ATP = L-phenylalanyl-tRNA(Phe) + AMP + diphosphate + H(+). This is Phenylalanine--tRNA ligase alpha subunit from Thermotoga petrophila (strain ATCC BAA-488 / DSM 13995 / JCM 10881 / RKU-1).